We begin with the raw amino-acid sequence, 282 residues long: ATP synthase gamma chain (282 aa).

The protein belongs to the ATPase gamma chain family. In terms of assembly, F-type ATPases have 2 components, CF(1) - the catalytic core - and CF(0) - the membrane proton channel. CF(1) has five subunits: alpha(3), beta(3), gamma(1), delta(1), epsilon(1). CF(0) has three main subunits: a, b and c.

It is found in the cell membrane. Its function is as follows. Produces ATP from ADP in the presence of a proton gradient across the membrane. The gamma chain is believed to be important in regulating ATPase activity and the flow of protons through the CF(0) complex. The protein is ATP synthase gamma chain of Clostridium botulinum (strain Langeland / NCTC 10281 / Type F).